A 581-amino-acid chain; its full sequence is CUE domain-containing protein 3 (581 aa).

The CUE domain occupies 271 to 314 (INPGDVKSLIELFPQLSVEEAVEHLSASLGNIDAACESVITSSL). The residue at position 386 (Y386) is a Phosphotyrosine. Disordered regions lie at residues 422-448 (DDTY…ASSK) and 522-581 (GSGN…SNEK). Residues 522-542 (GSGNTNIGSLRQTKFKQSNYT) are compositionally biased toward polar residues. Residues 552–581 (QHRPSRPSKNPSLKKKKYVRTKPKKASNEK) show a composition bias toward basic residues.

As to quaternary structure, component of the RQT (ribosome quality control trigger) complex.

The protein localises to the cytoplasm. It is found in the nucleus. Its function is as follows. Involved in activation of the ribosome quality control (RQC) pathway, a pathway that degrades nascent peptide chains during problematic translation. Specifically recognizes and binds RPS20/uS10 ubiquitinated by HEL2, promoting recruitment of the RQT (ribosome quality control trigger) complex on stalled ribosomes, followed by disassembly of stalled ribosomes. The sequence is that of CUE domain-containing protein 3 from Schizosaccharomyces pombe (strain 972 / ATCC 24843) (Fission yeast).